Reading from the N-terminus, the 372-residue chain is MADS-box transcription factor pvg4 (372 aa).

Residues 1 to 61 form the MADS-box domain; it reads MGRKKISIAP…GRLHVFCSSD (61 aa). Residues 81–187 are disordered; it reads SHFSSSPVEE…HPPHPHFHNN (107 aa). The segment covering 84–100 has biased composition (low complexity); it reads SSSPVEESSTVSPETTT. Over residues 114–145 the composition is skewed to polar residues; the sequence is QDQPLSDSQLDTGDSPATSETTVQDYNPQVQS. The segment covering 167–184 has biased composition (basic residues); that stretch reads QHHHPHTRPPHHPPHPHF.

It localises to the nucleus. Acts in transcription regulation. May bind to a MEF2-like typee II promoter sequence. In Schizosaccharomyces pombe (strain 972 / ATCC 24843) (Fission yeast), this protein is MADS-box transcription factor pvg4 (pvg4).